A 351-amino-acid polypeptide reads, in one-letter code: MTATIPPLTPTVTPSNPDRPIADLKLQDIIKTLPKECFEKKASKAWASVLITLGAIAVGYLGIIYLPWYCLPITWIWTGTALTGAFVVGHDCGHRSFAKKRWVNDLVGHIAFAPLIYPFHSWRLLHDHHHLHTNKIEVDNAWDPWSVEAFQASPAIVRLFYRAIRGPFWWTGSIFHWSLMHFKLSNFAQRDRNKVKLSIAVVFLFAAIAFPALIITTGVWGFVKFWLMPWLVYHFWMSTFTIVHHTIPEIRFRPAADWSAAEAQLNGTVHCDYPRWVEVLCHDINVHIPHHLSVAIPSYNLRLAHGSLKENWGPFLYERTFNWQLMQQISGQCHLYDPEHGYRTFGSLKKV.

Transmembrane regions (helical) follow at residues 46–66 (WASVLITLGAIAVGYLGIIYL) and 68–88 (WYCLPITWIWTGTALTGAFVV). Positions 90–94 (HDCGH) match the Histidine box-1 motif. The chain crosses the membrane as a helical span at residues 102 to 122 (WVNDLVGHIAFAPLIYPFHSW). A Histidine box-2 motif is present at residues 126 to 130 (HDHHH). Helical transmembrane passes span 199–219 (IAVVFLFAAIAFPALIITTGV) and 222–242 (FVKFWLMPWLVYHFWMSTFTI). Positions 290–294 (HHLSV) match the Histidine box-3 motif.

It belongs to the fatty acid desaturase type 2 family. It depends on Fe(2+) as a cofactor.

It localises to the membrane. The enzyme catalyses a 1-[(9Z)-octadecenoyl]-2-acyl-glycerolipid + 2 reduced [2Fe-2S]-[ferredoxin] + O2 + 2 H(+) = a 1-[(9Z,12Z)-octadecdienoyl]-2-acyl-glycerolipid + 2 oxidized [2Fe-2S]-[ferredoxin] + 2 H2O. It functions in the pathway lipid metabolism; polyunsaturated fatty acid biosynthesis. Its function is as follows. Desaturase involved in fatty acid biosynthesis. Introduces a double bond at carbon 12 of oleoyl groups (18:1) attached to the sn-1 position of the glycerol moiety of membrane glycerolipids. This enzyme is involved in chilling tolerance because the phase transition temperature of lipids of cellular membranes depends on the degree of unsaturation of fatty acids of the membrane lipids. The polypeptide is sn-1 oleoyl-lipid 12-desaturase (Synechocystis sp. (strain ATCC 27184 / PCC 6803 / Kazusa)).